The sequence spans 251 residues: 2-C-methyl-D-erythritol 4-phosphate cytidylyltransferase (251 aa).

Belongs to the IspD/TarI cytidylyltransferase family. IspD subfamily.

The enzyme catalyses 2-C-methyl-D-erythritol 4-phosphate + CTP + H(+) = 4-CDP-2-C-methyl-D-erythritol + diphosphate. It participates in isoprenoid biosynthesis; isopentenyl diphosphate biosynthesis via DXP pathway; isopentenyl diphosphate from 1-deoxy-D-xylulose 5-phosphate: step 2/6. In terms of biological role, catalyzes the formation of 4-diphosphocytidyl-2-C-methyl-D-erythritol from CTP and 2-C-methyl-D-erythritol 4-phosphate (MEP). This chain is 2-C-methyl-D-erythritol 4-phosphate cytidylyltransferase, found in Cupriavidus pinatubonensis (strain JMP 134 / LMG 1197) (Cupriavidus necator (strain JMP 134)).